The primary structure comprises 343 residues: Allergin-1 (343 aa).

A signal peptide spans 1–19 (MWSHLNRLLFWSIFSSVTC). The Extracellular segment spans residues 20 to 227 (RKAVLDCEAM…GGDSCPFCLK (208 aa)). 2 consecutive Ig-like C2-type domains span residues 35–118 (PSPC…RDFS) and 128–213 (PVLN…HPVT). N-linked (GlcNAc...) asparagine glycosylation is found at Asn-51, Asn-60, Asn-89, Asn-151, Asn-157, and Asn-182. 2 disulfides stabilise this stretch: Cys-56–Cys-103 and Cys-147–Cys-196. A helical membrane pass occupies residues 228-248 (LLLPGLLLLLVVIILILAFWV). The Cytoplasmic segment spans residues 249-343 (LPKYKTRKAM…SGYVYSELNF (95 aa)). 2 consecutive short sequence motifs (ITIM motif) follow at residues 311-316 (LQYATP) and 336-341 (YVYSEL). Phosphotyrosine occurs at positions 313 and 338.

As to quaternary structure, monomer. Interacts (tyrosine-phosphorylated) with PTPN6, PTPN11 and INPP5D. In terms of processing, N-glycosylated. Expressed in myeloid cells (dendritic cells, macrophages and neutrophils, weak expression on B-cells but not in T-cells or natural killer cells), peripheral blood basophils and mast cells (at protein level).

The protein localises to the cell membrane. Its function is as follows. Immunoglobulin-like receptor which plays an inhibitory role in degranulation of mast cells. Negatively regulates IgE-mediated mast cell activation and suppresses the type I immediate hypersensitivity reaction. The protein is Allergin-1 (MILR1) of Homo sapiens (Human).